The chain runs to 181 residues: Peptidyl-tRNA hydrolase (181 aa).

Residue tyrosine 14 coordinates tRNA. Histidine 19 functions as the Proton acceptor in the catalytic mechanism. 3 residues coordinate tRNA: tyrosine 62, asparagine 64, and asparagine 108.

The protein belongs to the PTH family. Monomer.

Its subcellular location is the cytoplasm. It carries out the reaction an N-acyl-L-alpha-aminoacyl-tRNA + H2O = an N-acyl-L-amino acid + a tRNA + H(+). In terms of biological role, hydrolyzes ribosome-free peptidyl-tRNAs (with 1 or more amino acids incorporated), which drop off the ribosome during protein synthesis, or as a result of ribosome stalling. Catalyzes the release of premature peptidyl moieties from peptidyl-tRNA molecules trapped in stalled 50S ribosomal subunits, and thus maintains levels of free tRNAs and 50S ribosomes. The polypeptide is Peptidyl-tRNA hydrolase (Campylobacter jejuni subsp. jejuni serotype O:2 (strain ATCC 700819 / NCTC 11168)).